We begin with the raw amino-acid sequence, 333 residues long: Salivary glue protein Sgs-3 (333 aa).

An N-terminal signal peptide occupies residues 1–23; the sequence is MKLTIATALVGILLIACAHVANG. The interval 51–285 is disordered; sequence TCRPPTTTRC…ATARPTSKPC (235 aa). The span at 60–73 shows a compositional bias: pro residues; the sequence is CPPPTTTRCPPPTR. A compositionally biased stretch (low complexity) spans 74–88; that stretch reads PAECTATTKRPTARP. The span at 89 to 277 shows a compositional bias: basic residues; the sequence is TTKRATTRRT…TKRATTKRAT (189 aa).

This chain is Salivary glue protein Sgs-3 (Sgs3), found in Drosophila erecta (Fruit fly).